Reading from the N-terminus, the 350-residue chain is Small ribosomal subunit biogenesis GTPase RsgA (350 aa).

Over residues 1-17 the composition is skewed to polar residues; the sequence is MSKNKLSKGQQRRVNAN. Residues 1–33 form a disordered region; sequence MSKNKLSKGQQRRVNANHQRRLKTSKEKPDYDD. In terms of domain architecture, CP-type G spans 104–273; the sequence is TSVLTRPDFY…VIDSPGVREF (170 aa). Residues 160–163 and 214–222 each bind GTP; these read NKID and GQSGVGKSS. Cys297, Cys302, His304, and Cys310 together coordinate Zn(2+).

Belongs to the TRAFAC class YlqF/YawG GTPase family. RsgA subfamily. In terms of assembly, monomer. Associates with 30S ribosomal subunit, binds 16S rRNA. Requires Zn(2+) as cofactor.

Its subcellular location is the cytoplasm. Functionally, one of several proteins that assist in the late maturation steps of the functional core of the 30S ribosomal subunit. Helps release RbfA from mature subunits. May play a role in the assembly of ribosomal proteins into the subunit. Circularly permuted GTPase that catalyzes slow GTP hydrolysis, GTPase activity is stimulated by the 30S ribosomal subunit. This Escherichia coli (strain ATCC 8739 / DSM 1576 / NBRC 3972 / NCIMB 8545 / WDCM 00012 / Crooks) protein is Small ribosomal subunit biogenesis GTPase RsgA.